The chain runs to 291 residues: MMTQSIRRSMLTVMATLPLLFSSATLHAQANSVQQQLEALEKSSGGRLGVALINTADNSQILYVADERFAMCSTSKVMAAAAVLKQSESDKHLLNQRVEIRASDLVNYNPIAEKHVNGTMTLAQLGAGALQYSDNTAMNKLIAHLGGPDKVTAFARSLGDETFRLDRTEPTLNSAIPGDPRDTTTPLAMAQTLKNLTLGKALAETQRAQLVTWLKGNTTGSASIRAGLPKSWGVGDKTGSGDYGTTNDIAVIWPENHAPLVLVTYFTQPEQKAESRRDVLAAAAKIVTHGF.

The signal sequence occupies residues Met-1–Ala-28. Residue Ser-73 is the Acyl-ester intermediate of the active site. Lys-237–Gly-239 is a binding site for substrate.

Belongs to the class-A beta-lactamase family.

The enzyme catalyses a beta-lactam + H2O = a substituted beta-amino acid. Functionally, has cefotaxime-hydrolyzing activity. The sequence is that of Beta-lactamase CTX-M-6 (bla) from Salmonella typhimurium.